The sequence spans 244 residues: MRWQDQGIVIAIRKYGDDQIIISIFTQKHGLKKGLAKYSKKATHRLQIGDYVNVTWSSRLISNLGCFKYELIKSTLYHYIQDNLKTMCIAFSTVILDQVLPENEENYIIYNCLDIFINSIQFQDINWKIKYLRLELTLLSELGFGLDLSRCAVNNTNENLTFISPKTGKAVSKTVGLPYSKSLLPLPQLLYDVYNNYEYKYSKTDFKLSLNVLGYFFKKHFLTEKNTILIKYREEIIKLIDLRD.

The protein belongs to the RecO family.

In terms of biological role, involved in DNA repair and RecF pathway recombination. In Ehrlichia chaffeensis (strain ATCC CRL-10679 / Arkansas), this protein is DNA repair protein RecO.